A 169-amino-acid chain; its full sequence is Putative ribonuclease VapC50 (169 aa).

Its function is as follows. Toxic component of a type II toxin-antitoxin (TA) system. An RNase. The cognate antitoxin is VapB50. The chain is Putative ribonuclease VapC50 from Mycobacterium tuberculosis (strain ATCC 25618 / H37Rv).